Reading from the N-terminus, the 122-residue chain is Hydrogenase maturation factor HypA (122 aa).

His2 serves as a coordination point for Ni(2+). Zn(2+)-binding residues include Cys73, Cys75, Cys95, and Cys98.

It belongs to the HypA/HybF family.

Functionally, involved in the maturation of [NiFe] hydrogenases. Required for nickel insertion into the metal center of the hydrogenase. This Methanothermobacter thermautotrophicus (strain ATCC 29096 / DSM 1053 / JCM 10044 / NBRC 100330 / Delta H) (Methanobacterium thermoautotrophicum) protein is Hydrogenase maturation factor HypA.